The chain runs to 284 residues: Bifunctional protein FolD (284 aa).

Residues 165–167 (GRS), serine 190, and isoleucine 231 each bind NADP(+).

The protein belongs to the tetrahydrofolate dehydrogenase/cyclohydrolase family. In terms of assembly, homodimer.

It catalyses the reaction (6R)-5,10-methylene-5,6,7,8-tetrahydrofolate + NADP(+) = (6R)-5,10-methenyltetrahydrofolate + NADPH. It carries out the reaction (6R)-5,10-methenyltetrahydrofolate + H2O = (6R)-10-formyltetrahydrofolate + H(+). It functions in the pathway one-carbon metabolism; tetrahydrofolate interconversion. In terms of biological role, catalyzes the oxidation of 5,10-methylenetetrahydrofolate to 5,10-methenyltetrahydrofolate and then the hydrolysis of 5,10-methenyltetrahydrofolate to 10-formyltetrahydrofolate. The chain is Bifunctional protein FolD from Dechloromonas aromatica (strain RCB).